A 437-amino-acid polypeptide reads, in one-letter code: Adenylyltransferase and sulfurtransferase MOCS3 (437 aa).

ATP-binding positions include Gly82, Asp103, 110–114 (TNLHR), Lys127, and 171–172 (DN). Residues Cys212 and Cys215 each coordinate Zn(2+). Cys229 functions as the Glycyl thioester intermediate; for adenylyltransferase activity in the catalytic mechanism. Cys287 and Cys290 together coordinate Zn(2+). Positions 337–435 (SNVPHLLVDV…WTHNIDPEFP (99 aa)) constitute a Rhodanese domain. Residue Cys391 is the Cysteine persulfide intermediate; for sulfurtransferase activity of the active site.

In the N-terminal section; belongs to the HesA/MoeB/ThiF family. UBA4 subfamily. The cofactor is Zn(2+).

Its subcellular location is the cytoplasm. The protein resides in the cytosol. It catalyses the reaction [molybdopterin-synthase sulfur-carrier protein]-C-terminal Gly-Gly + ATP + H(+) = [molybdopterin-synthase sulfur-carrier protein]-C-terminal Gly-Gly-AMP + diphosphate. The enzyme catalyses [molybdopterin-synthase sulfur-carrier protein]-C-terminal Gly-Gly-AMP + S-sulfanyl-L-cysteinyl-[cysteine desulfurase] + AH2 = [molybdopterin-synthase sulfur-carrier protein]-C-terminal-Gly-aminoethanethioate + L-cysteinyl-[cysteine desulfurase] + A + AMP + 2 H(+). It functions in the pathway tRNA modification; 5-methoxycarbonylmethyl-2-thiouridine-tRNA biosynthesis. The protein operates within cofactor biosynthesis; molybdopterin biosynthesis. In terms of biological role, plays a central role in 2-thiolation of mcm(5)S(2)U at tRNA wobble positions of cytosolic tRNA(Lys), tRNA(Glu) and tRNA(Gln). Also essential during biosynthesis of the molybdenum cofactor. Acts by mediating the C-terminal thiocarboxylation of sulfur carriers URM1 and MOCS2A. Its N-terminus first activates URM1 and MOCS2A as acyl-adenylates (-COAMP), then the persulfide sulfur on the catalytic cysteine is transferred to URM1 and MOCS2A to form thiocarboxylation (-COSH) of their C-terminus. The reaction probably involves hydrogen sulfide that is generated from the persulfide intermediate and that acts as a nucleophile towards URM1 and MOCS2A. Subsequently, a transient disulfide bond is formed. Does not use thiosulfate as sulfur donor; NFS1 probably acting as a sulfur donor for thiocarboxylation reactions. This is Adenylyltransferase and sulfurtransferase MOCS3 from Aedes aegypti (Yellowfever mosquito).